The primary structure comprises 61 residues: uncharacterized protein (61 aa).

This is an uncharacterized protein from Dictyostelium discoideum (Social amoeba).